The chain runs to 128 residues: Glycine cleavage system H protein (128 aa).

In terms of domain architecture, Lipoyl-binding spans Val23–Gln105. Lys64 bears the N6-lipoyllysine mark.

It belongs to the GcvH family. In terms of assembly, the glycine cleavage system is composed of four proteins: P, T, L and H. The cofactor is (R)-lipoate.

Its function is as follows. The glycine cleavage system catalyzes the degradation of glycine. The H protein shuttles the methylamine group of glycine from the P protein to the T protein. The sequence is that of Glycine cleavage system H protein from Alcanivorax borkumensis (strain ATCC 700651 / DSM 11573 / NCIMB 13689 / SK2).